A 149-amino-acid polypeptide reads, in one-letter code: Ribonuclease pancreatic (149 aa).

A signal peptide spans 1–25 (MGLEKSFILFSLLVLVLGWVQPSLS). Residues 30-40 (ADKFKRQHMDT) show a composition bias toward basic and acidic residues. A disordered region spans residues 30–49 (ADKFKRQHMDTEGSSNSSPT). Substrate is bound by residues lysine 32 and arginine 35. Histidine 37 functions as the Proton acceptor in the catalytic mechanism. Disulfide bonds link cysteine 51-cysteine 109, cysteine 65-cysteine 120, cysteine 83-cysteine 135, and cysteine 90-cysteine 97. N-linked (GlcNAc...) asparagine glycosylation is present at asparagine 62. Residue 66–70 (KPVNT) coordinates substrate. N-linked (GlcNAc...) asparagine glycosylation is present at asparagine 87. 2 residues coordinate substrate: lysine 91 and arginine 110. Residue histidine 144 is the Proton donor of the active site.

It belongs to the pancreatic ribonuclease family. As to quaternary structure, monomer. Interacts with and forms tight 1:1 complexes with RNH1. Dimerization of two such complexes may occur. Interaction with RNH1 inhibits this protein. As to expression, pancreas.

The protein localises to the secreted. It catalyses the reaction an [RNA] containing cytidine + H2O = an [RNA]-3'-cytidine-3'-phosphate + a 5'-hydroxy-ribonucleotide-3'-[RNA].. The enzyme catalyses an [RNA] containing uridine + H2O = an [RNA]-3'-uridine-3'-phosphate + a 5'-hydroxy-ribonucleotide-3'-[RNA].. Its function is as follows. Endonuclease that catalyzes the cleavage of RNA on the 3' side of pyrimidine nucleotides. Acts on single-stranded and double-stranded RNA. The chain is Ribonuclease pancreatic (RNASE1) from Niviventer cremoriventer (Dark-tailed tree rat).